The primary structure comprises 474 residues: 4-aminobutyrate aminotransferase (474 aa).

Positions 1–13 (MSSTATVTESTHF) are enriched in polar residues. Positions 1-31 (MSSTATVTESTHFFPNEPQGPSIKTETIPGP) are disordered. 142–143 (GS) contacts pyridoxal 5'-phosphate. A substrate-binding site is contributed by Arg-199. Lys-333 bears the N6-(pyridoxal phosphate)lysine mark. Thr-357 provides a ligand contact to pyridoxal 5'-phosphate.

Belongs to the class-III pyridoxal-phosphate-dependent aminotransferase family. Homodimer. Requires pyridoxal 5'-phosphate as cofactor.

The protein localises to the cytoplasm. The enzyme catalyses 4-aminobutanoate + 2-oxoglutarate = succinate semialdehyde + L-glutamate. Functionally, required for the degradation of gamma-aminobutyric acid (GABA), which is important for utilization of GABA as nitrogen source. Deaminates GABA to succinate-semialdehyde, which in turn is converted to succinate by the succinate semialdehyde dehydrogenase. Cannot transaminate beta-alanine (BAL). This is 4-aminobutyrate aminotransferase (uga1) from Schizosaccharomyces pombe (strain 972 / ATCC 24843) (Fission yeast).